The chain runs to 694 residues: Methionine--tRNA ligase (694 aa).

Positions 12-22 match the 'HIGH' region motif; that stretch reads PYANGPLHLGH. Zn(2+) is bound by residues Cys143, Cys146, Cys156, and Cys159. The 'KMSKS' region motif lies at 330-334; that stretch reads KMSKS. Position 333 (Lys333) interacts with ATP. A disordered region spans residues 550 to 577; sequence LAAPATPATASKPAPAKADAKPAAAANP. The span at 551–575 shows a compositional bias: low complexity; the sequence is AAPATPATASKPAPAKADAKPAAAA. Positions 591-694 constitute a tRNA-binding domain; it reads DFAKLDLRIG…SGAQPGMPVR (104 aa).

It belongs to the class-I aminoacyl-tRNA synthetase family. MetG type 1 subfamily. In terms of assembly, homodimer. Requires Zn(2+) as cofactor.

The protein localises to the cytoplasm. The enzyme catalyses tRNA(Met) + L-methionine + ATP = L-methionyl-tRNA(Met) + AMP + diphosphate. Functionally, is required not only for elongation of protein synthesis but also for the initiation of all mRNA translation through initiator tRNA(fMet) aminoacylation. The protein is Methionine--tRNA ligase of Xanthomonas axonopodis pv. citri (strain 306).